The primary structure comprises 427 residues: Histidinol dehydrogenase (427 aa).

The NAD(+) site is built by Tyr-127, Gln-187, and Asn-210. Ser-233, Gln-255, and His-258 together coordinate substrate. Zn(2+)-binding residues include Gln-255 and His-258. Catalysis depends on proton acceptor residues Glu-323 and His-324. Residues His-324, Asp-357, Glu-411, and His-416 each contribute to the substrate site. Residue Asp-357 coordinates Zn(2+). Position 416 (His-416) interacts with Zn(2+).

The protein belongs to the histidinol dehydrogenase family. The cofactor is Zn(2+).

The catalysed reaction is L-histidinol + 2 NAD(+) + H2O = L-histidine + 2 NADH + 3 H(+). It functions in the pathway amino-acid biosynthesis; L-histidine biosynthesis; L-histidine from 5-phospho-alpha-D-ribose 1-diphosphate: step 9/9. Catalyzes the sequential NAD-dependent oxidations of L-histidinol to L-histidinaldehyde and then to L-histidine. The protein is Histidinol dehydrogenase of Streptococcus mutans serotype c (strain ATCC 700610 / UA159).